The following is a 196-amino-acid chain: Protein hunchback (196 aa).

Disordered regions lie at residues 16-60 (SHHH…NTNL) and 90-196 (AMTP…KYMA). Basic residues predominate over residues 17 to 30 (HHHHHHHAHHSYHQ). Polar residues predominate over residues 92-103 (TPSSSNNDQNSP). Residues 125 to 144 (PTATTTTTPAAAAPTTTAAT) are compositionally biased toward low complexity. The segment covering 176–196 (AEREKEHDLMSNSSEDMKYMA) has biased composition (basic and acidic residues).

The protein belongs to the hunchback C2H2-type zinc-finger protein family.

It is found in the nucleus. Functionally, gap class segmentation protein that controls development of head structures. The polypeptide is Protein hunchback (hb) (Drosophila silvestris (Fruit fly)).